A 524-amino-acid polypeptide reads, in one-letter code: Excitatory amino acid transporter 3 (524 aa).

Topologically, residues M1–N18 are cytoplasmic. The chain crosses the membrane as a helical span at residues W19–V38. Residues R39–R61 lie on the Extracellular side of the membrane. N-linked (GlcNAc...) asparagine glycosylation is present at N43. Residues M62 to L82 traverse the membrane as a helical segment. Residues D83 to R93 lie on the Cytoplasmic side of the membrane. Residues A94 to V114 traverse the membrane as a helical segment. Residues Y98, T101, and T102 each coordinate Na(+). Over S115–L205 the chain is Extracellular. N-linked (GlcNAc...) asparagine glycosylation is found at N178 and N195. The chain crosses the membrane as a helical span at residues Y206–M229. Topologically, residues G230–D238 are cytoplasmic. The helical transmembrane segment at F239–I266 threads the bilayer. Residues A267–M286 lie on the Extracellular side of the membrane. A helical membrane pass occupies residues V287–V308. The Cytoplasmic segment spans residues V309–P313. An intramembrane region (discontinuously helical) is located at residues F314–A344. Positions 331 and 333 each coordinate L-aspartate. Topologically, residues E345–R353 are cytoplasmic. Residues I354 to F380 traverse the membrane as a helical segment. Positions 362, 364, 366, and 368 each coordinate Na(+). Position 370 (T370) interacts with L-aspartate. The Extracellular segment spans residues I381–Q393. The segment at residues I394–G427 is an intramembrane region (discontinuously helical). Na(+) contacts are provided by S405, I406, and A408. V411 is an L-aspartate binding site. Topologically, residues L428–D440 are extracellular. A helical transmembrane segment spans residues W441–V462. L-aspartate contacts are provided by R447, T448, and N451. Residues N451 and D455 each contribute to the Na(+) site. The Cytoplasmic segment spans residues E463–F524. S517 and S522 each carry phosphoserine.

Belongs to the dicarboxylate/amino acid:cation symporter (DAACS) (TC 2.A.23) family. SLC1A1 subfamily. As to quaternary structure, homotrimer. Interacts with ARL6IP5. Interacts with RTN2 (via N-terminus); the interaction promotes cell surface expression of SLC1A1. Interacts with SORCS2; this interaction is important for normal expression at the cell membrane. As to expression, brain, but also small intestine, kidney, liver and heart.

The protein resides in the cell membrane. It localises to the apical cell membrane. The protein localises to the synapse. It is found in the synaptosome. Its subcellular location is the early endosome membrane. The protein resides in the late endosome membrane. It localises to the recycling endosome membrane. The catalysed reaction is K(+)(in) + L-glutamate(out) + 3 Na(+)(out) + H(+)(out) = K(+)(out) + L-glutamate(in) + 3 Na(+)(in) + H(+)(in). It catalyses the reaction K(+)(in) + L-aspartate(out) + 3 Na(+)(out) + H(+)(out) = K(+)(out) + L-aspartate(in) + 3 Na(+)(in) + H(+)(in). The enzyme catalyses D-aspartate(out) + K(+)(in) + 3 Na(+)(out) + H(+)(out) = D-aspartate(in) + K(+)(out) + 3 Na(+)(in) + H(+)(in). It carries out the reaction K(+)(in) + L-cysteine(out) + 3 Na(+)(out) + H(+)(out) = K(+)(out) + L-cysteine(in) + 3 Na(+)(in) + H(+)(in). Sodium-dependent, high-affinity amino acid transporter that mediates the uptake of L-glutamate and also L-aspartate and D-aspartate. Can also transport L-cysteine. Functions as a symporter that transports one amino acid molecule together with two or three Na(+) ions and one proton, in parallel with the counter-transport of one K(+) ion. Mediates Cl(-) flux that is not coupled to amino acid transport; this avoids the accumulation of negative charges due to aspartate and Na(+) symport. Plays an important role in L-glutamate and L-aspartate reabsorption in renal tubuli. Plays a redundant role in the rapid removal of released glutamate from the synaptic cleft, which is essential for terminating the postsynaptic action of glutamate. Contributes to glutathione biosynthesis and protection against oxidative stress via its role in L-glutamate and L-cysteine transport. Negatively regulated by ARL6IP5. The sequence is that of Excitatory amino acid transporter 3 (SLC1A1) from Oryctolagus cuniculus (Rabbit).